The primary structure comprises 132 residues: Global transcriptional regulator Spx (132 aa).

Cysteines 10 and 13 form a disulfide.

The protein belongs to the ArsC family. Spx subfamily. In terms of assembly, interacts with the C-terminal domain of the alpha subunit of the RNAP.

Its subcellular location is the cytoplasm. Its function is as follows. Global transcriptional regulator that plays a key role in stress response and exerts either positive or negative regulation of genes. Acts by interacting with the C-terminal domain of the alpha subunit of the RNA polymerase (RNAP). This interaction can enhance binding of RNAP to the promoter region of target genes and stimulate their transcription, or block interaction of RNAP with activator. The sequence is that of Global transcriptional regulator Spx from Lactiplantibacillus plantarum (strain ATCC BAA-793 / NCIMB 8826 / WCFS1) (Lactobacillus plantarum).